The following is a 912-amino-acid chain: Glutamate receptor 3.2 (912 aa).

A signal peptide spans 1–22 (MFWVLVLLSFIVLIGDGMISEG). At 23–587 (AGLRPRYVDV…TPWAFLRPFT (565 aa)) the chain is on the extracellular side. N-linked (GlcNAc...) asparagine glycosylation is found at Asn-306, Asn-338, Asn-378, Asn-417, Asn-435, Asn-445, and Asn-532. Glycine is bound by residues 544–546 (DIA) and Arg-551. Residues 544-546 (DIA) and Arg-551 each bind L-methionine. Residues 588–608 (PPMWAVTAAFFLIVGSVIWIL) traverse the membrane as a helical segment. The Cytoplasmic portion of the chain corresponds to 609-617 (EHRINDEFR). A helical membrane pass occupies residues 618–638 (GPPRKQIVTILWFSFSTMFFS). Over 639–649 (HRENTVSTLGR) the chain is Cytoplasmic. A helical membrane pass occupies residues 650–670 (AVLLIWLFVVLIITSSYTASL). At 671 to 828 (TSILTVQQLN…EDSEQLKLRS (158 aa)) the chain is on the extracellular side. Position 703 (Tyr-703) interacts with glycine. Tyr-703 lines the L-methionine pocket. Residue Asn-734 is glycosylated (N-linked (GlcNAc...) asparagine). Residue 743 to 746 (ERPY) participates in glycine binding. 743–746 (ERPY) contributes to the L-methionine binding site. An intrachain disulfide couples Cys-755 to Cys-809. N-linked (GlcNAc...) asparagine glycans are attached at residues Asn-808 and Asn-813. The chain crosses the membrane as a helical span at residues 829-849 (FWGLFLVCGISCFIALFIYFF). The Cytoplasmic segment spans residues 850–912 (KIVRDFFRHG…DLSLKPSRPI (63 aa)). Residues 888–912 (KEDESKRRMKRKRNDDLSLKPSRPI) form a disordered region.

This sequence belongs to the glutamate-gated ion channel (TC 1.A.10.1) family. Forms a heteromeric channel with GLR3.4. Expressed in leaves and siliques, and at lower level in flowers and roots. Detected in the vascular tissues of both shoots and roots. Expressed in root phloem.

It is found in the cell membrane. In terms of biological role, glutamate-gated receptor that probably acts as a non-selective cation channel. May be involved in light-signal transduction and calcium homeostasis via the regulation of calcium influx into cells. Could play a role in calcium unloading from the xylem vessels. Acts as a negative regulator of lateral root initiation and development. May restrict primordia numbers and position along the root axis by a signaling process originating in the phloem. The sequence is that of Glutamate receptor 3.2 from Arabidopsis thaliana (Mouse-ear cress).